Reading from the N-terminus, the 45-residue chain is Large ribosomal subunit protein bL34 (45 aa).

Positions 1 to 45 are disordered; the sequence is MTKRTFGGTSRKRKRVSGFRVRMRTHTGRSVIRSRRKKGRSRIAV. The span at 10–45 shows a compositional bias: basic residues; sequence SRKRKRVSGFRVRMRTHTGRSVIRSRRKKGRSRIAV.

This sequence belongs to the bacterial ribosomal protein bL34 family.

This is Large ribosomal subunit protein bL34 from Prochlorococcus marinus (strain SARG / CCMP1375 / SS120).